A 95-amino-acid chain; its full sequence is MAFKFNAEVRTAQGKGASRRLRHNGQIPAIVYGGSEEPVSIILNHDELNNAQAHESFYSEVITLVVEGKEVAVKVQAMQRHPFKPKLVHIDFKRA.

Belongs to the bacterial ribosomal protein bL25 family. As to quaternary structure, part of the 50S ribosomal subunit; part of the 5S rRNA/L5/L18/L25 subcomplex. Contacts the 5S rRNA. Binds to the 5S rRNA independently of L5 and L18.

This is one of the proteins that binds to the 5S RNA in the ribosome where it forms part of the central protuberance. The sequence is that of Large ribosomal subunit protein bL25 from Haemophilus influenzae (strain ATCC 51907 / DSM 11121 / KW20 / Rd).